Consider the following 186-residue polypeptide: ATP synthase subunit delta (186 aa).

This sequence belongs to the ATPase delta chain family. As to quaternary structure, F-type ATPases have 2 components, F(1) - the catalytic core - and F(0) - the membrane proton channel. F(1) has five subunits: alpha(3), beta(3), gamma(1), delta(1), epsilon(1). F(0) has three main subunits: a(1), b(2) and c(10-14). The alpha and beta chains form an alternating ring which encloses part of the gamma chain. F(1) is attached to F(0) by a central stalk formed by the gamma and epsilon chains, while a peripheral stalk is formed by the delta and b chains.

The protein localises to the cell inner membrane. Its function is as follows. F(1)F(0) ATP synthase produces ATP from ADP in the presence of a proton or sodium gradient. F-type ATPases consist of two structural domains, F(1) containing the extramembraneous catalytic core and F(0) containing the membrane proton channel, linked together by a central stalk and a peripheral stalk. During catalysis, ATP synthesis in the catalytic domain of F(1) is coupled via a rotary mechanism of the central stalk subunits to proton translocation. In terms of biological role, this protein is part of the stalk that links CF(0) to CF(1). It either transmits conformational changes from CF(0) to CF(1) or is implicated in proton conduction. This chain is ATP synthase subunit delta, found in Leptospira interrogans serogroup Icterohaemorrhagiae serovar copenhageni (strain Fiocruz L1-130).